Consider the following 487-residue polypeptide: Calcium-binding tyrosine phosphorylation-regulated protein (487 aa).

The 38-residue stretch at 12–49 (YGLKTLLEGISRAVLKTNPSDINQFAAAYFQELTMYRG) folds into the RIIa domain. 2 stretches are compositionally biased toward basic and acidic residues: residues 78 to 91 (KKLECLKEPEKTSV) and 101 to 117 (KSTDTDEDNVTRTEYSD). Disordered regions lie at residues 78–163 (KKLE…AVSP), 243–271 (VDLGSQPKENEAEQSTASSVPLQDEQEPP), and 420–487 (IVSD…ATAE). A compositionally biased stretch (low complexity) spans 140 to 152 (SSSKPATPKATTP). Composition is skewed to polar residues over residues 420–436 (IVSDNTGQEESGENSVP) and 455–464 (SGTSVKSSSG). Residues 478 to 487 (IEPEGEATAE) show a composition bias toward acidic residues.

In terms of assembly, interacts with FSCB. Post-translationally, phosphorylated on tyrosine residues during in vitro capacitation. Dephosphorylation affects its ability to bind calcium.

The protein resides in the cytoplasm. Its subcellular location is the cytoskeleton. It localises to the cell projection. It is found in the cilium. The protein localises to the flagellum. In terms of biological role, may function as a regulator of both motility- and head-associated functions such as capacitation and the acrosome reaction. May bind calcium in vitro. The protein is Calcium-binding tyrosine phosphorylation-regulated protein (CABYR) of Macaca fascicularis (Crab-eating macaque).